A 196-amino-acid chain; its full sequence is ATP-dependent Clp protease proteolytic subunit (196 aa).

The Nucleophile role is filled by S101. Residue H126 is part of the active site.

It belongs to the peptidase S14 family. Component of the chloroplastic Clp protease core complex.

The protein localises to the plastid. Its subcellular location is the chloroplast stroma. The catalysed reaction is Hydrolysis of proteins to small peptides in the presence of ATP and magnesium. alpha-casein is the usual test substrate. In the absence of ATP, only oligopeptides shorter than five residues are hydrolyzed (such as succinyl-Leu-Tyr-|-NHMec, and Leu-Tyr-Leu-|-Tyr-Trp, in which cleavage of the -Tyr-|-Leu- and -Tyr-|-Trp bonds also occurs).. Functionally, cleaves peptides in various proteins in a process that requires ATP hydrolysis. Has a chymotrypsin-like activity. Plays a major role in the degradation of misfolded proteins. This chain is ATP-dependent Clp protease proteolytic subunit, found in Vitis vinifera (Grape).